A 58-amino-acid chain; its full sequence is DNA-directed RNA polymerases I, II, and III subunit RPABC4 (58 aa).

Residues cysteine 19, cysteine 22, cysteine 36, and cysteine 39 each coordinate Zn(2+). Residues 19 to 39 (CGECHTENEIKSRDPIRCREC) form a C4-type zinc finger.

Belongs to the archaeal Rpo12/eukaryotic RPC10 RNA polymerase subunit family. In terms of assembly, component of the RNA polymerase I (Pol I), RNA polymerase II (Pol II) and RNA polymerase III (Pol III) complexes consisting of at least 13, 12 and 17 subunits, respectively. Pol I complex consists of a ten-subunit catalytic core composed of POLR1A/RPA1, POLR1B/RPA2, POLR1C/RPAC1, POLR1D/RPAC2, POLR1H/RPA12, POLR2E/RPABC1, POLR2F/RPABC2, POLR2H/RPABC3, POLR2K/RPABC4 and POLR2L/RPABC5; a mobile stalk subunit POLR1F/RPA43 protruding from the core and additional subunits homologous to general transcription factors POLR1E/RPA49 and POLR1G/RPA34. Part of Pol I pre-initiation complex (PIC), in which Pol I core assembles with RRN3 and promoter-bound UTBF and SL1/TIF-IB complex. Pol II complex contains a ten-subunit catalytic core composed of POLR2A/RPB1, POLR2B/RPB2, POLR2C/RPB3, POLR2I/RPB9, POLR2J/RPB11, POLR2E/RPABC1, POLR2F/RPABC2, POLR2H/RPABC3, POLR2K/RPABC4 and POLR2L/RPABC5 and a mobile stalk composed of two subunits POLR2D/RPB4 and POLR2G/RPB7. Part of Pol II(G) complex, in which Pol II core associates with an additional subunit POLR2M; unlike conventional Pol II, Pol II(G) functions as a transcriptional repressor. Part of TBP-based Pol II pre-initiation complex (PIC), in which Pol II core assembles with general transcription factors and other specific initiation factors including GTF2E1, GTF2E2, GTF2F1, GTF2F2, TCEA1, ERCC2, ERCC3, GTF2H2, GTF2H3, GTF2H4, GTF2H5, GTF2A1, GTF2A2, GTF2B and TBP; this large multi-subunit PIC complex mediates DNA unwinding and targets Pol II core to the transcription start site where the first phosphodiester bond forms. Pol III complex consists of a ten-subunit catalytic core composed of POLR3A/RPC1, POLR3B/RPC2, POLR1C/RPAC1, POLR1D/RPAC2, POLR3K/RPC10, POLR2E/RPABC1, POLR2F/RPABC2, POLR2H/RPABC3, POLR2K/RPABC4 and POLR2L/RPABC5; a mobile stalk composed of two subunits POLR3H/RPC8 and CRCP/RPC9, protruding from the core and functioning primarily in transcription initiation; and additional subunits homologous to general transcription factors of the RNA polymerase II machinery, POLR3C/RPC3-POLR3F/RPC6-POLR3G/RPC7 heterotrimer required for transcription initiation and POLR3D/RPC4-POLR3E/RPC5 heterodimer involved in both transcription initiation and termination.

The protein localises to the nucleus. The protein resides in the nucleolus. DNA-dependent RNA polymerase catalyzes the transcription of DNA into RNA using the four ribonucleoside triphosphates as substrates. Common component of RNA polymerases I, II and III which synthesize ribosomal RNA precursors, mRNA precursors and many functional non-coding RNAs, and a small RNAs, such as 5S rRNA and tRNAs, respectively. In Bos taurus (Bovine), this protein is DNA-directed RNA polymerases I, II, and III subunit RPABC4 (POLR2K).